The following is a 435-amino-acid chain: D-amino acid dehydrogenase (435 aa).

3 to 17 is an FAD binding site; sequence VLILGSGVIGTTSAW.

It belongs to the DadA oxidoreductase family. FAD serves as cofactor.

The catalysed reaction is a D-alpha-amino acid + A + H2O = a 2-oxocarboxylate + AH2 + NH4(+). It functions in the pathway amino-acid degradation; D-alanine degradation; NH(3) and pyruvate from D-alanine: step 1/1. Oxidative deamination of D-amino acids. In Xylella fastidiosa (strain M23), this protein is D-amino acid dehydrogenase.